Reading from the N-terminus, the 509-residue chain is ATP synthase subunit alpha (509 aa).

169–176 (GDRQTGKT) serves as a coordination point for ATP.

Belongs to the ATPase alpha/beta chains family. F-type ATPases have 2 components, CF(1) - the catalytic core - and CF(0) - the membrane proton channel. CF(1) has five subunits: alpha(3), beta(3), gamma(1), delta(1), epsilon(1). CF(0) has three main subunits: a(1), b(2) and c(9-12). The alpha and beta chains form an alternating ring which encloses part of the gamma chain. CF(1) is attached to CF(0) by a central stalk formed by the gamma and epsilon chains, while a peripheral stalk is formed by the delta and b chains.

Its subcellular location is the cell inner membrane. The enzyme catalyses ATP + H2O + 4 H(+)(in) = ADP + phosphate + 5 H(+)(out). Produces ATP from ADP in the presence of a proton gradient across the membrane. The alpha chain is a regulatory subunit. This Novosphingobium aromaticivorans (strain ATCC 700278 / DSM 12444 / CCUG 56034 / CIP 105152 / NBRC 16084 / F199) protein is ATP synthase subunit alpha.